The chain runs to 313 residues: tRNA dimethylallyltransferase (313 aa).

14 to 21 provides a ligand contact to ATP; that stretch reads GPTASGKT. A substrate-binding site is contributed by 16-21; it reads TASGKT. 2 interaction with substrate tRNA regions span residues 39–42 and 163–167; these read DSAL and QRIGR.

It belongs to the IPP transferase family. As to quaternary structure, monomer. Mg(2+) serves as cofactor.

It catalyses the reaction adenosine(37) in tRNA + dimethylallyl diphosphate = N(6)-dimethylallyladenosine(37) in tRNA + diphosphate. Catalyzes the transfer of a dimethylallyl group onto the adenine at position 37 in tRNAs that read codons beginning with uridine, leading to the formation of N6-(dimethylallyl)adenosine (i(6)A). This is tRNA dimethylallyltransferase from Thiobacillus denitrificans (strain ATCC 25259 / T1).